A 567-amino-acid chain; its full sequence is Urease subunit alpha (567 aa).

In terms of domain architecture, Urease spans Gly-129–Phe-567. Residues His-134, His-136, and Lys-217 each contribute to the Ni(2+) site. N6-carboxylysine is present on Lys-217. His-219 contacts substrate. Positions 246 and 272 each coordinate Ni(2+). The active-site Proton donor is His-320. Ni(2+) is bound at residue Asp-360.

Belongs to the metallo-dependent hydrolases superfamily. Urease alpha subunit family. Heterotrimer of UreA (gamma), UreB (beta) and UreC (alpha) subunits. Three heterotrimers associate to form the active enzyme. The cofactor is Ni cation. In terms of processing, carboxylation allows a single lysine to coordinate two nickel ions.

It localises to the cytoplasm. The catalysed reaction is urea + 2 H2O + H(+) = hydrogencarbonate + 2 NH4(+). It functions in the pathway nitrogen metabolism; urea degradation; CO(2) and NH(3) from urea (urease route): step 1/1. This chain is Urease subunit alpha, found in Psychromonas ingrahamii (strain DSM 17664 / CCUG 51855 / 37).